A 333-amino-acid chain; its full sequence is UDP-3-O-acylglucosamine N-acyltransferase 2 (333 aa).

Catalysis depends on H243, which acts as the Proton acceptor.

The protein belongs to the transferase hexapeptide repeat family. LpxD subfamily. As to quaternary structure, homotrimer.

The enzyme catalyses a UDP-3-O-[(3R)-3-hydroxyacyl]-alpha-D-glucosamine + a (3R)-hydroxyacyl-[ACP] = a UDP-2-N,3-O-bis[(3R)-3-hydroxyacyl]-alpha-D-glucosamine + holo-[ACP] + H(+). Its pathway is bacterial outer membrane biogenesis; LPS lipid A biosynthesis. Its function is as follows. Catalyzes the N-acylation of UDP-3-O-acylglucosamine using 3-hydroxyacyl-ACP as the acyl donor. Is involved in the biosynthesis of lipid A, a phosphorylated glycolipid that anchors the lipopolysaccharide to the outer membrane of the cell. The polypeptide is UDP-3-O-acylglucosamine N-acyltransferase 2 (Koribacter versatilis (strain Ellin345)).